Consider the following 127-residue polypeptide: Fluoride-specific ion channel FluC (127 aa).

4 consecutive transmembrane segments (helical) span residues Phe-4–Ile-24, Gly-35–Met-55, Ile-71–Val-91, and Phe-99–Ile-119. Na(+) is bound by residues Gly-78 and Thr-81.

Belongs to the fluoride channel Fluc/FEX (TC 1.A.43) family.

It localises to the cell inner membrane. It catalyses the reaction fluoride(in) = fluoride(out). With respect to regulation, na(+) is not transported, but it plays an essential structural role and its presence is essential for fluoride channel function. Functionally, fluoride-specific ion channel. Important for reducing fluoride concentration in the cell, thus reducing its toxicity. This is Fluoride-specific ion channel FluC from Photobacterium profundum (strain SS9).